The sequence spans 217 residues: Nucleolar protein 12 (217 aa).

Residues G34–Q98 adopt a coiled-coil conformation. The disordered stretch occupies residues L122 to E217. Acidic residues predominate over residues G130–S141. 2 stretches are compositionally biased toward basic residues: residues A172–R184 and K201–E217.

This sequence belongs to the RRP17 family. In terms of assembly, interacts with KIAA1191. Expressed in brain, lung, spleen, kidney and heart.

It is found in the nucleus. The protein resides in the nucleolus. Its subcellular location is the cytoplasm. Multifunctional RNA binding protein that plays a role in RNA metabolism and DNA maintenance. Participates in the resolution of DNA stress and the maintenance of genome integrity by localizing to sites of DNA insults. Also plays a role in proper nucleolar organization by limiting nucleolar size and regulating nucleolar number. Mechanistically, regulates the nucleolar levels of fibrillarin and nucleolin, two key players in pre-rRNA processing and ribosome assembly. This chain is Nucleolar protein 12 (Nol12), found in Mus musculus (Mouse).